Reading from the N-terminus, the 326-residue chain is MVSQTVSVAVTGGTGQIAYSFLFSLAHGDVFGLDCGIDLRIYDIPGTERALSGVRMELDDGAFPLLQRVQVTTSLHDAFDGIDAAFLIGSVPRGPGMERRDLLKKNGEIVATQGKALNTTAKRDAKIFVVGNPVNTNCWIAMNHAPRLLRKNFHAMLRLDQNRMHSMLSHRAEVPLSAVSQVVVWGNHSAKQVPDFTQALINDRPIAETIADRDWLENIMVPSVQSRGSAVIEARGKSSAASAARALAEAARSIYQPKEGEWFSSGVCSDHNPYGLPEDLIFGFPCRMLATGEYEVIPGLPWDAFIRGKMQISLDEILQEKASVSL.

12 to 18 (GGTGQIA) is a binding site for NAD(+). Residues arginine 93 and arginine 99 each contribute to the substrate site. Residues asparagine 106, glutamine 113, and 130–132 (VGN) contribute to the NAD(+) site. 2 residues coordinate substrate: asparagine 132 and arginine 163. The Proton acceptor role is filled by histidine 188.

The protein belongs to the LDH/MDH superfamily. MDH type 2 family.

The enzyme catalyses (S)-malate + NAD(+) = oxaloacetate + NADH + H(+). Its function is as follows. Catalyzes the reversible oxidation of malate to oxaloacetate. In Chlamydia trachomatis serovar L2 (strain ATCC VR-902B / DSM 19102 / 434/Bu), this protein is Malate dehydrogenase.